Here is a 162-residue protein sequence, read N- to C-terminus: Peptide deformylase (162 aa).

Fe cation is bound by residues Cys-86 and His-128. The active site involves Glu-129. His-132 provides a ligand contact to Fe cation.

The protein belongs to the polypeptide deformylase family. It depends on Fe(2+) as a cofactor.

It carries out the reaction N-terminal N-formyl-L-methionyl-[peptide] + H2O = N-terminal L-methionyl-[peptide] + formate. Its function is as follows. Removes the formyl group from the N-terminal Met of newly synthesized proteins. Requires at least a dipeptide for an efficient rate of reaction. N-terminal L-methionine is a prerequisite for activity but the enzyme has broad specificity at other positions. This Treponema pallidum (strain Nichols) protein is Peptide deformylase.